The sequence spans 104 residues: UPF0213 protein in VLF1-GP41 intergenic region (104 aa).

A GIY-YIG domain is found at K9 to K89.

Belongs to the UPF0213 family.

The sequence is that of UPF0213 protein in VLF1-GP41 intergenic region from Autographa californica nuclear polyhedrosis virus (AcMNPV).